Consider the following 691-residue polypeptide: MPRTHAIEDYRNFGIMAHIDAGKTTTTERILYYTGKSHKIGEVHEGAATMDWMEQEQERGITITSAATTCFWRDKRLNIIDTPGHVDFTIEVERSLRVLDGAVCVLDGNQGVEPQTETVWRQADKYDVPRVVFVNKMDKIGADFFKCVADIIDRVAGKPVCLQLPIGSENNFRGVIDLIKMKAIVWSGEALGANFSEEAIPADLAEQAAEYRTKLIEACVEMDDDAMTAYLDGVEPDEDTMRRLVRTAVQRRAFHPVLCGSAFKNKGVQPLLDAVVDYLPSPADRGEIKGIDYKTEEEVVRRPSDAEPFSMLAFKIMDDPHVGTITFCRIYSGKVESGANLLNSTRDKRERVGRMLLMHANNREDIKEAYAGDIVALAGLKDTRTGDTLCDPTKAVILEKMEFPEPVIEIAVEPKSKADQEKLGIALSKLAAEDPSFRVSTDPESGQTILKGMGELHLDIKVDILKRTYKVEANIGQPQVAYREKLTRRTEIDYTHKKQTGGTGQFARVKLVVEPNEPGAGYAFESKIVGGAVPKEYVPGVEKGLNSVLTAGILAGFPVVDIKVELIDGAYHEVDSSALAFEIASRAALREALQKGGSVLLEPVMKVEVVTPEDYTGSVIGDLNSRRGQIQGQDMRGNANVINAMVPLANMFGYVNQLRSFTQGRANFTMQFDHYEEVPRGEAEKVVAKYA.

A tr-type G domain is found at 8–283 (EDYRNFGIMA…AVVDYLPSPA (276 aa)). Residues 17 to 24 (AHIDAGKT), 81 to 85 (DTPGH), and 135 to 138 (NKMD) each bind GTP.

It belongs to the TRAFAC class translation factor GTPase superfamily. Classic translation factor GTPase family. EF-G/EF-2 subfamily.

It localises to the cytoplasm. Its function is as follows. Catalyzes the GTP-dependent ribosomal translocation step during translation elongation. During this step, the ribosome changes from the pre-translocational (PRE) to the post-translocational (POST) state as the newly formed A-site-bound peptidyl-tRNA and P-site-bound deacylated tRNA move to the P and E sites, respectively. Catalyzes the coordinated movement of the two tRNA molecules, the mRNA and conformational changes in the ribosome. This chain is Elongation factor G, found in Methylobacterium sp. (strain 4-46).